The chain runs to 92 residues: DNA-directed RNA polymerase subunit Rpo11 (92 aa).

It belongs to the archaeal Rpo11/eukaryotic RPB11/RPC19 RNA polymerase subunit family. As to quaternary structure, part of the RNA polymerase complex.

The protein localises to the cytoplasm. The catalysed reaction is RNA(n) + a ribonucleoside 5'-triphosphate = RNA(n+1) + diphosphate. DNA-dependent RNA polymerase (RNAP) catalyzes the transcription of DNA into RNA using the four ribonucleoside triphosphates as substrates. This is DNA-directed RNA polymerase subunit Rpo11 from Methanosarcina mazei (strain ATCC BAA-159 / DSM 3647 / Goe1 / Go1 / JCM 11833 / OCM 88) (Methanosarcina frisia).